A 223-amino-acid polypeptide reads, in one-letter code: Deoxyribose-phosphate aldolase (223 aa).

D91 acts as the Proton donor/acceptor in catalysis. Catalysis depends on K154, which acts as the Schiff-base intermediate with acetaldehyde. K183 acts as the Proton donor/acceptor in catalysis.

This sequence belongs to the DeoC/FbaB aldolase family. DeoC type 1 subfamily.

Its subcellular location is the cytoplasm. It carries out the reaction 2-deoxy-D-ribose 5-phosphate = D-glyceraldehyde 3-phosphate + acetaldehyde. Its pathway is carbohydrate degradation; 2-deoxy-D-ribose 1-phosphate degradation; D-glyceraldehyde 3-phosphate and acetaldehyde from 2-deoxy-alpha-D-ribose 1-phosphate: step 2/2. Its function is as follows. Catalyzes a reversible aldol reaction between acetaldehyde and D-glyceraldehyde 3-phosphate to generate 2-deoxy-D-ribose 5-phosphate. This is Deoxyribose-phosphate aldolase from Geobacillus sp. (strain WCH70).